The sequence spans 499 residues: Bifunctional purine biosynthesis protein PurH (499 aa).

The region spanning Met-1–Thr-144 is the MGS-like domain.

It belongs to the PurH family.

The catalysed reaction is (6R)-10-formyltetrahydrofolate + 5-amino-1-(5-phospho-beta-D-ribosyl)imidazole-4-carboxamide = 5-formamido-1-(5-phospho-D-ribosyl)imidazole-4-carboxamide + (6S)-5,6,7,8-tetrahydrofolate. It carries out the reaction IMP + H2O = 5-formamido-1-(5-phospho-D-ribosyl)imidazole-4-carboxamide. It participates in purine metabolism; IMP biosynthesis via de novo pathway; 5-formamido-1-(5-phospho-D-ribosyl)imidazole-4-carboxamide from 5-amino-1-(5-phospho-D-ribosyl)imidazole-4-carboxamide (10-formyl THF route): step 1/1. It functions in the pathway purine metabolism; IMP biosynthesis via de novo pathway; IMP from 5-formamido-1-(5-phospho-D-ribosyl)imidazole-4-carboxamide: step 1/1. The chain is Bifunctional purine biosynthesis protein PurH from Clostridium botulinum (strain Loch Maree / Type A3).